Here is a 588-residue protein sequence, read N- to C-terminus: Adenine deaminase (588 aa).

Belongs to the metallo-dependent hydrolases superfamily. Adenine deaminase family. In terms of assembly, homodimer. The cofactor is Mn(2+).

It catalyses the reaction adenine + H2O + H(+) = hypoxanthine + NH4(+). The protein is Adenine deaminase of Escherichia coli O17:K52:H18 (strain UMN026 / ExPEC).